We begin with the raw amino-acid sequence, 464 residues long: Divalent metal cation transporter MntH (464 aa).

11 helical membrane passes run 57 to 77 (ILIA…AGGA), 82 to 102 (SLLS…SMAA), 125 to 145 (GIIL…AEII), 157 to 177 (IPLV…LLLM), 186 to 206 (AIVA…VFLA), 229 to 249 (MLYL…LYLG), 281 to 301 (LTIA…LFFG), 321 to 341 (IVGA…LLSS), 376 to 396 (LLSV…EAKI), 399 to 419 (LLTL…VPLV), and 443 to 463 (VATV…VGVI).

The protein belongs to the NRAMP family.

The protein resides in the cell membrane. In terms of biological role, h(+)-stimulated, divalent metal cation uptake system. The polypeptide is Divalent metal cation transporter MntH (Levilactobacillus brevis (Lactobacillus brevis)).